We begin with the raw amino-acid sequence, 349 residues long: 4-hydroxy-2-oxovalerate aldolase 1 (349 aa).

A Pyruvate carboxyltransferase domain is found at 9–261 (ITVHDMTLRD…ATGVDVFRIQ (253 aa)). 17-18 (RD) is a substrate binding site. Aspartate 18 serves as a coordination point for Mn(2+). Histidine 21 (proton acceptor) is an active-site residue. Residues serine 171 and histidine 200 each coordinate substrate. Mn(2+) contacts are provided by histidine 200 and histidine 202. Tyrosine 291 is a substrate binding site.

This sequence belongs to the 4-hydroxy-2-oxovalerate aldolase family.

It catalyses the reaction (S)-4-hydroxy-2-oxopentanoate = acetaldehyde + pyruvate. This is 4-hydroxy-2-oxovalerate aldolase 1 from Methylibium petroleiphilum (strain ATCC BAA-1232 / LMG 22953 / PM1).